The primary structure comprises 315 residues: MHGHGGYDSDFSDDEQGGGSSKKRKKTVEDELLLTKPFQKERHGKVAHKQVAADLLDREEARNRRFHLIAMDAYQRHTKFVNDYILYYGGKREDFKRLGENDKTDLDVIRENHRFLWNEEDEADMTWEKRLAKKYYDKLFKEYCIADLSRYKENKFGFRWRIEKEVISGKGQFFCGNKCCNEKEGLRSWEVNFGYTEHGEKRNALVKLRLCQECSFKLNFHHRRKEIKSTKKKSKTTPECDESPRKKSRSPPSEEASKGKDEGHSSSKKSEDSRNRNAEEEDSASDSELWKGPLPETDEKSQEEEFDDYFQDLFL.

N-acetylmethionine is present on M1. Positions 1–28 (MHGHGGYDSDFSDDEQGGGSSKKRKKTV) are disordered. Phosphoserine occurs at positions 9 and 12. At K36 the chain carries N6-acetyllysine. The span at 225-235 (KEIKSTKKKSK) shows a compositional bias: basic residues. The disordered stretch occupies residues 225–308 (KEIKSTKKKS…EKSQEEEFDD (84 aa)). Basic and acidic residues-rich tracts occupy residues 236-245 (TTPECDESPR) and 255-278 (EASK…NRNA). Phosphoserine occurs at positions 283 and 285.

Interacts with ESS2.

Its subcellular location is the nucleus. Functionally, may be involved in pre-mRNA splicing. This is Protein FRA10AC1 homolog (Fra10ac1) from Mus musculus (Mouse).